The chain runs to 206 residues: Large ribosomal subunit protein uL4 (206 aa).

The interval 47-94 is disordered; it reads NRAQKGRAEVSKSTRKPWRQKGTGRARAGMASSPLWRGGGRVFPNSPE. A compositionally biased stretch (basic residues) spans 59-70; sequence STRKPWRQKGTG.

Belongs to the universal ribosomal protein uL4 family. As to quaternary structure, part of the 50S ribosomal subunit.

One of the primary rRNA binding proteins, this protein initially binds near the 5'-end of the 23S rRNA. It is important during the early stages of 50S assembly. It makes multiple contacts with different domains of the 23S rRNA in the assembled 50S subunit and ribosome. In terms of biological role, forms part of the polypeptide exit tunnel. The polypeptide is Large ribosomal subunit protein uL4 (Aromatoleum aromaticum (strain DSM 19018 / LMG 30748 / EbN1) (Azoarcus sp. (strain EbN1))).